Reading from the N-terminus, the 277-residue chain is NADPH-dependent 7-cyano-7-deazaguanine reductase (277 aa).

83-85 lines the substrate pocket; the sequence is VES. NADPH is bound at residue 85–86; it reads SK. Cys184 acts as the Thioimide intermediate in catalysis. The Proton donor role is filled by Asp191. 223–224 contacts substrate; that stretch reads HE. 252 to 253 is an NADPH binding site; it reads RG.

The protein belongs to the GTP cyclohydrolase I family. QueF type 2 subfamily. As to quaternary structure, homodimer.

Its subcellular location is the cytoplasm. It catalyses the reaction 7-aminomethyl-7-carbaguanine + 2 NADP(+) = 7-cyano-7-deazaguanine + 2 NADPH + 3 H(+). It participates in tRNA modification; tRNA-queuosine biosynthesis. Catalyzes the NADPH-dependent reduction of 7-cyano-7-deazaguanine (preQ0) to 7-aminomethyl-7-deazaguanine (preQ1). The polypeptide is NADPH-dependent 7-cyano-7-deazaguanine reductase (Cupriavidus metallidurans (strain ATCC 43123 / DSM 2839 / NBRC 102507 / CH34) (Ralstonia metallidurans)).